Reading from the N-terminus, the 372-residue chain is MAEKLHISVLCGGQSTEHEISIQSAKNIVNTLDAAKYLISLIFIDHVGRWYLIDQPEMFLAHSPDHLVKEGSARPITIAFGDAAKPWQSLNGDGRRYSADCVFPMVHGTQGEDGALQGLLELLNLPYVGANVQSSAVCMEKDLTKTVLRAGGIPVVDWHTLSPRDATEGVYQRLLDRWGTSELFVKAVSLGSSVATLPVKTETEFTKAVKEVFRYDDRLMVEPRIRGREIECAVLGNGAPKASLPGEIIPHHDYYSYDAKYLDPNGATTTTSVDLSESVTKQIQQIAIDAFKMVHCSGMARVDFFVTPNNKVLVNEINTIPGFTNISMYPKMWEASGLPCPNLLDQLIELAIDRHQEQQKLIRCYEVKARSL.

One can recognise an ATP-grasp domain in the interval 145–349 (KTVLRAGGIP…CPNLLDQLIE (205 aa)). Position 176–231 (176–231 (DRWGTSELFVKAVSLGSSVATLPVKTETEFTKAVKEVFRYDDRLMVEPRIRGREIE)) interacts with ATP. Residues D303, E316, and N318 each coordinate Mg(2+).

This sequence belongs to the D-alanine--D-alanine ligase family. Requires Mg(2+) as cofactor. Mn(2+) serves as cofactor.

It localises to the cytoplasm. The catalysed reaction is 2 D-alanine + ATP = D-alanyl-D-alanine + ADP + phosphate + H(+). It functions in the pathway cell wall biogenesis; peptidoglycan biosynthesis. Cell wall formation. This chain is D-alanine--D-alanine ligase, found in Coxiella burnetii (strain CbuK_Q154) (Coxiella burnetii (strain Q154)).